A 244-amino-acid chain; its full sequence is Probable transcriptional regulatory protein BT0025 (244 aa).

This sequence belongs to the TACO1 family.

It localises to the cytoplasm. This chain is Probable transcriptional regulatory protein BT0025, found in Borrelia turicatae (strain 91E135).